The primary structure comprises 397 residues: Acetate kinase (397 aa).

A Mg(2+)-binding site is contributed by N7. Residue K14 coordinates ATP. R91 serves as a coordination point for substrate. Residue D148 is the Proton donor/acceptor of the active site. Residues 208–212, 283–285, and 331–335 each bind ATP; these read HIGNG, DMR, and GVGEN. Residue E384 coordinates Mg(2+).

This sequence belongs to the acetokinase family. In terms of assembly, homodimer. Mg(2+) serves as cofactor. The cofactor is Mn(2+).

Its subcellular location is the cytoplasm. The catalysed reaction is acetate + ATP = acetyl phosphate + ADP. It functions in the pathway metabolic intermediate biosynthesis; acetyl-CoA biosynthesis; acetyl-CoA from acetate: step 1/2. Functionally, catalyzes the formation of acetyl phosphate from acetate and ATP. Can also catalyze the reverse reaction. In Azobacteroides pseudotrichonymphae genomovar. CFP2, this protein is Acetate kinase.